Reading from the N-terminus, the 315-residue chain is tRNA pseudouridine synthase B (315 aa).

His-42 contacts substrate. Residue Asp-47 is the Nucleophile of the active site. Tyr-75, Tyr-178, and Leu-199 together coordinate substrate.

It belongs to the pseudouridine synthase TruB family. Type 1 subfamily.

The enzyme catalyses uridine(55) in tRNA = pseudouridine(55) in tRNA. In terms of biological role, responsible for synthesis of pseudouridine from uracil-55 in the psi GC loop of transfer RNAs. The sequence is that of tRNA pseudouridine synthase B from Photorhabdus laumondii subsp. laumondii (strain DSM 15139 / CIP 105565 / TT01) (Photorhabdus luminescens subsp. laumondii).